The sequence spans 506 residues: Deoxyribodipyrimidine photo-lyase (506 aa).

Over residues 1–21 (MPPTSVSPPRTAPGPANPSPA) the composition is skewed to pro residues. The interval 1–33 (MPPTSVSPPRTAPGPANPSPAHPSRVRVIHPGG) is disordered. The Photolyase/cryptochrome alpha/beta domain maps to 38-171 (GPVVYWMLRD…AVHQVDAHNV (134 aa)). FAD-binding positions include Tyr-268 and 282-285 (SGLS). The residue at position 312 (Ser-312) is a Phosphoserine. FAD-binding positions include 319–327 (ELVVRRELA), Lys-390, Asn-421, Asp-427, and 427–429 (DGR). The tract at residues 487-506 (KKRNAEESPNPVVKLSKSQH) is disordered.

Belongs to the DNA photolyase class-2 family. Requires FAD as cofactor. Expressed in proliferating tissues. Highly expressed in roots and shoot apical meristem (SAM). Expressed in leaves, flag leaves, and panicle.

It is found in the nucleus. The enzyme catalyses cyclobutadipyrimidine (in DNA) = 2 pyrimidine residues (in DNA).. In terms of biological role, involved in repair of UV radiation-induced DNA damage. Catalyzes the light-dependent monomerization (300-600 nm) of cyclobutylpyrimidine dimers (CPDs), which are formed between adjacent bases on the same DNA strand upon exposure to ultraviolet radiation. Required for plant survival in the presence of UV-B light. Not involved in the repair of (6-4) photoproducts. The sequence is that of Deoxyribodipyrimidine photo-lyase (PHR) from Oryza sativa subsp. japonica (Rice).